Here is a 325-residue protein sequence, read N- to C-terminus: Isoaspartyl peptidase/L-asparaginase (325 aa).

The Nucleophile role is filled by Thr193. Residues 221 to 224 (RIGD) and 243 to 246 (TGKG) each bind substrate.

It belongs to the Ntn-hydrolase family. In terms of assembly, heterotetramer of two alpha and two beta chains arranged as a dimer of alpha/beta heterodimers. Cleaved into an alpha and beta chain by autocatalysis; this activates the enzyme. The N-terminal residue of the beta subunit is responsible for the nucleophile hydrolase activity. In terms of tissue distribution, developing seeds.

The enzyme catalyses Cleavage of a beta-linked Asp residue from the N-terminus of a polypeptide.. Its function is as follows. Acts in asparagine catabolism but also in the final steps of protein degradation via hydrolysis of a range of isoaspartyl dipeptides. In Lupinus angustifolius (Narrow-leaved blue lupine), this protein is Isoaspartyl peptidase/L-asparaginase.